We begin with the raw amino-acid sequence, 179 residues long: NADH dehydrogenase [ubiquinone] 1 beta subcomplex subunit 9 (179 aa).

A2 is subject to N-acetylalanine. Position 85 is a phosphoserine (S85). Residues 136–162 (EVKQLQEETPPGGPLTEALPPARKEGD) are disordered.

This sequence belongs to the complex I LYR family. In terms of assembly, mammalian complex I is composed of 45 different subunits.

Its subcellular location is the mitochondrion inner membrane. In terms of biological role, accessory subunit of the mitochondrial membrane respiratory chain NADH dehydrogenase (Complex I), that is believed to be not involved in catalysis. Complex I functions in the transfer of electrons from NADH to the respiratory chain. The immediate electron acceptor for the enzyme is believed to be ubiquinone. The sequence is that of NADH dehydrogenase [ubiquinone] 1 beta subcomplex subunit 9 (NDUFB9) from Pan troglodytes (Chimpanzee).